The primary structure comprises 77 residues: Pollen allergen Amb p 5b (77 aa).

A signal peptide spans 1–22 (MNNEKNVSFEFIGSTNEVDEIK). Disulfide bonds link Cys26/Cys61, Cys33/Cys48, and Cys40/Cys54.

The protein resides in the secreted. This is Pollen allergen Amb p 5b from Ambrosia psilostachya (Western ragweed).